Consider the following 656-residue polypeptide: Macrolide export ATP-binding/permease protein MacB (656 aa).

One can recognise an ABC transporter domain in the interval 6–244 (LEVSACYRSF…AAPKTEVIPA (239 aa)). 42–49 (GASGSGKS) lines the ATP pocket. A run of 4 helical transmembrane segments spans residues 277–297 (FLTM…VALG), 531–551 (LLIS…VMNI), 586–606 (LVCL…GVVF), and 621–641 (SIVA…FLPA).

It belongs to the ABC transporter superfamily. Macrolide exporter (TC 3.A.1.122) family. As to quaternary structure, homodimer. Part of the tripartite efflux system MacAB-TolC, which is composed of an inner membrane transporter, MacB, a periplasmic membrane fusion protein, MacA, and an outer membrane component, TolC. The complex forms a large protein conduit and can translocate molecules across both the inner and outer membranes. Interacts with MacA.

Its subcellular location is the cell inner membrane. Its function is as follows. Part of the tripartite efflux system MacAB-TolC. MacB is a non-canonical ABC transporter that contains transmembrane domains (TMD), which form a pore in the inner membrane, and an ATP-binding domain (NBD), which is responsible for energy generation. Confers resistance against macrolides. The chain is Macrolide export ATP-binding/permease protein MacB from Shewanella sp. (strain ANA-3).